The sequence spans 181 residues: Probable RNA 2'-phosphotransferase (181 aa).

The protein belongs to the KptA/TPT1 family.

Functionally, removes the 2'-phosphate from RNA via an intermediate in which the phosphate is ADP-ribosylated by NAD followed by a presumed transesterification to release the RNA and generate ADP-ribose 1''-2''-cyclic phosphate (APPR&gt;P). May function as an ADP-ribosylase. The chain is Probable RNA 2'-phosphotransferase from Nostoc punctiforme (strain ATCC 29133 / PCC 73102).